A 370-amino-acid chain; its full sequence is uncharacterized protein (370 aa).

It belongs to the metallo-dependent hydrolases superfamily.

This is an uncharacterized protein from Mycobacterium bovis (strain ATCC BAA-935 / AF2122/97).